The sequence spans 681 residues: Elongation factor G (681 aa).

One can recognise a tr-type G domain in the interval 5–279; that stretch reads KNIRNIGIIA…SIVNFLPSPI (275 aa). GTP is bound by residues 14–21, 82–86, and 136–139; these read AHVDAGKT, DTPGH, and NKLD.

Belongs to the TRAFAC class translation factor GTPase superfamily. Classic translation factor GTPase family. EF-G/EF-2 subfamily.

It localises to the cytoplasm. Catalyzes the GTP-dependent ribosomal translocation step during translation elongation. During this step, the ribosome changes from the pre-translocational (PRE) to the post-translocational (POST) state as the newly formed A-site-bound peptidyl-tRNA and P-site-bound deacylated tRNA move to the P and E sites, respectively. Catalyzes the coordinated movement of the two tRNA molecules, the mRNA and conformational changes in the ribosome. This is Elongation factor G from Carsonella ruddii (strain PV).